Consider the following 258-residue polypeptide: Acetylglutamate kinase (258 aa).

Residues 44 to 45 (GG), arginine 66, and asparagine 158 each bind substrate. Residues 181–186 (DVSGIL) and 209–211 (IIT) contribute to the ATP site.

Belongs to the acetylglutamate kinase family. ArgB subfamily. Homodimer.

Its subcellular location is the cytoplasm. The enzyme catalyses N-acetyl-L-glutamate + ATP = N-acetyl-L-glutamyl 5-phosphate + ADP. It participates in amino-acid biosynthesis; L-arginine biosynthesis; N(2)-acetyl-L-ornithine from L-glutamate: step 2/4. Catalyzes the ATP-dependent phosphorylation of N-acetyl-L-glutamate. The sequence is that of Acetylglutamate kinase from Shigella flexneri serotype 5b (strain 8401).